The sequence spans 435 residues: Acetyltransferase atnC (435 aa).

3 helical membrane-spanning segments follow: residues 10 to 30 (AFAN…FLII), 40 to 60 (YFGI…APTL), and 68 to 88 (SFLA…LLIL). An N-linked (GlcNAc...) asparagine glycan is attached at Asn203. A run of 3 helical transmembrane segments spans residues 306-326 (FLVF…MGLS), 333-353 (IPYF…QAFY), and 370-390 (VVGF…YMFP). N-linked (GlcNAc...) asparagine glycosylation occurs at Asn406. A helical membrane pass occupies residues 407 to 427 (LTEVIGMPMMWGLLGTFGMLV).

Belongs to the wax synthase family.

The protein localises to the membrane. It functions in the pathway secondary metabolite biosynthesis; terpenoid biosynthesis. In terms of biological role, acetyltransferase; part of the gene cluster that mediates the biosynthesis of the meroterpenoids arthripenoids. The pathway begins with the HR-PKS atnH that catalyzes two chain-extension steps to form a reduced triketide, which then primes the SAT domain in the NR-PKS atnG to initiate three more cycles of extension to give a linear hexaketide corresponding to the polyketide part of arthripenoids. The FAD-dependent monooxygenase atnJ then performs an oxidative decarboxylation at C11 of the atnH/atnG product, via an electrophilic aromatic hydroxylation with concomitant ipso-decarboxylation. The membrane-bound polyprenyl transferase atnF then introduces a farnesyl group before the FAD-dependent monooxygenase atnK functions as the first epoxidase on terminal C12'-C13' olefin, followed by a second epoxidation on C7'-C8' catalyzed by atnA. The terpene cyclase/mutase atnI then initiates the sequential tricyclic ring formation through protonation of the terminal epoxide and catalyzes the regioselective and stereoselective 6/6/6-tricyclic ring formation. The cytochrome P450 monooxygenase atnM is responsible for hydroxylating both C1' and C10'. The next steps may involve ketoreduction and acetyl transfer by the ketoreductase atnB and the acetyltransferase atnC, and lead to the production of arthripenoid B, the final biosynthetic product of the atn cluster. The hydroquinone moiety in arthripenoid B is prone to undergo spontaneous oxidation to afford a benzoquinone compound, a key intermediate for generating structure diversity. For instance, addition of a cysteine followed by ring contraction gives arthripenoid A, tautomerization gives the main product arthripenoid C, addition of a molecular of water or amine affords arthripenoid D or E, respectively, and loss of one water forms arthripenoid F. The polypeptide is Acetyltransferase atnC (Arthrinium sp).